A 168-amino-acid polypeptide reads, in one-letter code: Ribosome maturation factor RimP (168 aa).

This sequence belongs to the RimP family.

The protein localises to the cytoplasm. Functionally, required for maturation of 30S ribosomal subunits. The sequence is that of Ribosome maturation factor RimP from Mycoplasma mobile (strain ATCC 43663 / 163K / NCTC 11711) (Mesomycoplasma mobile).